Consider the following 246-residue polypeptide: Probable transcriptional regulatory protein CTC_02215 (246 aa).

Belongs to the TACO1 family.

It is found in the cytoplasm. The chain is Probable transcriptional regulatory protein CTC_02215 from Clostridium tetani (strain Massachusetts / E88).